The following is a 1318-amino-acid chain: Serine/threonine-protein kinase ppk18 (1318 aa).

The interval 431–485 (PSVSPEEVHDISQFNHRNDPPITAASVDSSNSFSVHRSSTNHSSTNSGSPNLSRR) is disordered. Positions 462–479 (SFSVHRSSTNHSSTNSGS) are enriched in low complexity. The Protein kinase domain occupies 566-934 (YEIIKPISKG…INEIKEHPFF (369 aa)). ATP is bound by residues 572 to 580 (ISKGTFGTV) and Lys595. The Proton acceptor role is filled by Asp690. The region spanning 935–1044 (NGINWDDIFS…KNLSVLERAN (110 aa)) is the AGC-kinase C-terminal domain. 3 disordered regions span residues 968 to 1022 (GAAE…FSEA), 1058 to 1078 (KLHI…DMPS), and 1091 to 1127 (SLMT…GPKS). A compositionally biased stretch (polar residues) spans 972–1000 (SNMSSSVNSGEEVSKDNNVSQERGSQFLR). Residues 1091–1115 (SLMTNQGSNFSSTDSTPRKSINSSD) are compositionally biased toward polar residues. Over residues 1116 to 1127 (VESRSKTDGPKS) the composition is skewed to basic and acidic residues. The Response regulatory domain maps to 1200–1316 (KALICVSKLN…LLRGYIARLC (117 aa)).

Belongs to the protein kinase superfamily. Ser/Thr protein kinase family.

Its subcellular location is the cytoplasm. It catalyses the reaction L-seryl-[protein] + ATP = O-phospho-L-seryl-[protein] + ADP + H(+). It carries out the reaction L-threonyl-[protein] + ATP = O-phospho-L-threonyl-[protein] + ADP + H(+). The polypeptide is Serine/threonine-protein kinase ppk18 (ppk18) (Schizosaccharomyces pombe (strain 972 / ATCC 24843) (Fission yeast)).